The primary structure comprises 167 residues: NADH-quinone oxidoreductase subunit B 1 (167 aa).

[4Fe-4S] cluster contacts are provided by Cys38, Cys39, Cys104, and Cys133.

Belongs to the complex I 20 kDa subunit family. As to quaternary structure, NDH-1 is composed of 14 different subunits. Subunits NuoB, C, D, E, F, and G constitute the peripheral sector of the complex. [4Fe-4S] cluster serves as cofactor.

It localises to the cell membrane. It carries out the reaction a quinone + NADH + 5 H(+)(in) = a quinol + NAD(+) + 4 H(+)(out). Functionally, NDH-1 shuttles electrons from NADH, via FMN and iron-sulfur (Fe-S) centers, to quinones in the respiratory chain. The immediate electron acceptor for the enzyme in this species is believed to be ubiquinone. Couples the redox reaction to proton translocation (for every two electrons transferred, four hydrogen ions are translocated across the cytoplasmic membrane), and thus conserves the redox energy in a proton gradient. The chain is NADH-quinone oxidoreductase subunit B 1 from Roseiflexus castenholzii (strain DSM 13941 / HLO8).